The chain runs to 431 residues: Enolase (431 aa).

Substrate-binding residues include His-157 and Glu-166. The Proton donor role is filled by Glu-209. Residues Asp-244, Glu-293, and Asp-318 each coordinate Mg(2+). Residues Glu-293 and Asp-318 each coordinate substrate. Residue Lys-343 is the Proton acceptor of the active site. Substrate-binding positions include 370–373 (SHRS) and Lys-394.

This sequence belongs to the enolase family. As to quaternary structure, homodimer. Mg(2+) is required as a cofactor.

The protein localises to the cytoplasm. It carries out the reaction (2R)-2-phosphoglycerate = phosphoenolpyruvate + H2O. It participates in carbohydrate degradation; glycolysis; pyruvate from D-glyceraldehyde 3-phosphate: step 4/5. The protein is Enolase (ENO) of Fasciola hepatica (Liver fluke).